The chain runs to 297 residues: Protoheme IX farnesyltransferase 1 (297 aa).

The next 9 helical transmembrane spans lie at 23-43 (VVVL…RAGV), 45-65 (WSVL…AAVV), 93-113 (LPAL…LLVF), 117-137 (LTAW…TGFL), 145-165 (IVIG…AVSG), 171-191 (PLLL…ALAI), 216-236 (LHIL…YAIH), 241-261 (LYLA…WVLY), and 277-297 (IGYL…LLSL).

Belongs to the UbiA prenyltransferase family. Protoheme IX farnesyltransferase subfamily.

It is found in the cell inner membrane. It carries out the reaction heme b + (2E,6E)-farnesyl diphosphate + H2O = Fe(II)-heme o + diphosphate. The protein operates within porphyrin-containing compound metabolism; heme O biosynthesis; heme O from protoheme: step 1/1. Converts heme B (protoheme IX) to heme O by substitution of the vinyl group on carbon 2 of heme B porphyrin ring with a hydroxyethyl farnesyl side group. This is Protoheme IX farnesyltransferase 1 from Pseudomonas putida (strain ATCC 700007 / DSM 6899 / JCM 31910 / BCRC 17059 / LMG 24140 / F1).